The chain runs to 110 residues: Protein SPIRAL1-like 2 (110 aa).

The disordered stretch occupies residues 28 to 110 (AVNKTPAETE…LDYLFGGGSN (83 aa)). Over residues 40–52 (AHAPPTQAAAANA) the composition is skewed to low complexity. Polar residues predominate over residues 63–82 (LNSNSANNYMRAEGQNTGNF). Position 67 is a phosphoserine (serine 67). Over residues 95 to 110 (PGGGSSLDYLFGGGSN) the composition is skewed to gly residues.

Belongs to the SPIRAL1 family. Ubiquitous.

Acts redundantly with SPR1 in maintaining the cortical microtubules organization essential for anisotropic cell growth. This is Protein SPIRAL1-like 2 (SP1L2) from Arabidopsis thaliana (Mouse-ear cress).